The primary structure comprises 193 residues: Large ribosomal subunit protein bL21 (193 aa).

Belongs to the bacterial ribosomal protein bL21 family. In terms of assembly, part of the 50S ribosomal subunit. Contacts protein L20.

Its function is as follows. This protein binds to 23S rRNA in the presence of protein L20. The chain is Large ribosomal subunit protein bL21 from Ruegeria pomeroyi (strain ATCC 700808 / DSM 15171 / DSS-3) (Silicibacter pomeroyi).